The chain runs to 314 residues: Methionyl-tRNA formyltransferase (314 aa).

112-115 (SLLP) lines the (6S)-5,6,7,8-tetrahydrofolate pocket.

The protein belongs to the Fmt family.

The catalysed reaction is L-methionyl-tRNA(fMet) + (6R)-10-formyltetrahydrofolate = N-formyl-L-methionyl-tRNA(fMet) + (6S)-5,6,7,8-tetrahydrofolate + H(+). Its function is as follows. Attaches a formyl group to the free amino group of methionyl-tRNA(fMet). The formyl group appears to play a dual role in the initiator identity of N-formylmethionyl-tRNA by promoting its recognition by IF2 and preventing the misappropriation of this tRNA by the elongation apparatus. The chain is Methionyl-tRNA formyltransferase from Aeromonas salmonicida (strain A449).